A 122-amino-acid polypeptide reads, in one-letter code: Large ribosomal subunit protein uL14 (122 aa).

This sequence belongs to the universal ribosomal protein uL14 family. As to quaternary structure, part of the 50S ribosomal subunit. Forms a cluster with proteins L3 and L19. In the 70S ribosome, L14 and L19 interact and together make contacts with the 16S rRNA in bridges B5 and B8.

In terms of biological role, binds to 23S rRNA. Forms part of two intersubunit bridges in the 70S ribosome. This is Large ribosomal subunit protein uL14 from Chlamydia muridarum (strain MoPn / Nigg).